The chain runs to 170 residues: Putative calmodulin-like protein 6 (170 aa).

4 consecutive EF-hand domains span residues 8 to 43, 44 to 79, 84 to 119, and 120 to 155; these read QQISDFRDAFSLFDKNNDGCISREELATVLTRLGMA, PSQEDLQDMIVAVDEDGNGTIEFDEFLAIMKKKLYE, DDEEELRKAFRIFDKDDNGFISRNELSMVMASLGEE, and MTEDEIDDMMKAADSNNDGQVDYEEFKRVMMSTWNI. Asp21, Asn23, Asp25, Cys27, Glu32, Asp57, Asp59, Asn61, Thr63, Glu68, Asp97, Asp99, Asn101, Glu108, Asp133, Asn135, Asp137, Gln139, and Glu144 together coordinate Ca(2+).

This sequence belongs to the calmodulin family.

Functionally, potential calcium sensor. The sequence is that of Putative calmodulin-like protein 6 (CML6) from Oryza sativa subsp. japonica (Rice).